The primary structure comprises 217 residues: Uracil-DNA glycosylase (217 aa).

Catalysis depends on D62, which acts as the Proton acceptor.

Belongs to the uracil-DNA glycosylase (UDG) superfamily. UNG family.

Its subcellular location is the cytoplasm. It carries out the reaction Hydrolyzes single-stranded DNA or mismatched double-stranded DNA and polynucleotides, releasing free uracil.. Excises uracil residues from the DNA which can arise as a result of misincorporation of dUMP residues by DNA polymerase or due to deamination of cytosine. This Streptococcus uberis (strain ATCC BAA-854 / 0140J) protein is Uracil-DNA glycosylase.